Here is an 828-residue protein sequence, read N- to C-terminus: Periplasmic nitrate reductase (828 aa).

The tat-type signal signal peptide spans 1–31 (MKLSRRSFMKANAVAAAAAAAGLSVPGVARA). The 57-residue stretch at 39-95 (IKWDKAPCRFCGTGCGVLVGTQQGRVVACQGDPDAPVNRGLNCIKGYFLPKIMYGKD) folds into the 4Fe-4S Mo/W bis-MGD-type domain. The [4Fe-4S] cluster site is built by C46, C49, C53, and C81. Mo-bis(molybdopterin guanine dinucleotide)-binding positions include K83, Q150, N175, C179, 212 to 219 (WGANMAEM), 243 to 247 (STYQH), 262 to 264 (QSD), M372, Q376, N482, 508 to 509 (SD), K531, D558, and 718 to 727 (TGRVLEHWHT). Substrate is bound at residue F794. Residues N802 and K819 each coordinate Mo-bis(molybdopterin guanine dinucleotide).

Belongs to the prokaryotic molybdopterin-containing oxidoreductase family. NasA/NapA/NarB subfamily. Component of the periplasmic nitrate reductase NapAB complex composed of NapA and NapB. [4Fe-4S] cluster serves as cofactor. It depends on Mo-bis(molybdopterin guanine dinucleotide) as a cofactor. Post-translationally, predicted to be exported by the Tat system. The position of the signal peptide cleavage has not been experimentally proven.

It localises to the periplasm. It catalyses the reaction 2 Fe(II)-[cytochrome] + nitrate + 2 H(+) = 2 Fe(III)-[cytochrome] + nitrite + H2O. Catalytic subunit of the periplasmic nitrate reductase complex NapAB. Receives electrons from NapB and catalyzes the reduction of nitrate to nitrite. The polypeptide is Periplasmic nitrate reductase (Shigella flexneri).